We begin with the raw amino-acid sequence, 252 residues long: Triosephosphate isomerase (252 aa).

10–12 (NWK) lines the substrate pocket. Histidine 96 functions as the Electrophile in the catalytic mechanism. Catalysis depends on glutamate 168, which acts as the Proton acceptor. Residues glycine 174, serine 214, and 235 to 236 (GG) contribute to the substrate site.

Belongs to the triosephosphate isomerase family. In terms of assembly, homodimer.

The protein localises to the cytoplasm. It carries out the reaction D-glyceraldehyde 3-phosphate = dihydroxyacetone phosphate. Its pathway is carbohydrate biosynthesis; gluconeogenesis. It participates in carbohydrate degradation; glycolysis; D-glyceraldehyde 3-phosphate from glycerone phosphate: step 1/1. Involved in the gluconeogenesis. Catalyzes stereospecifically the conversion of dihydroxyacetone phosphate (DHAP) to D-glyceraldehyde-3-phosphate (G3P). The polypeptide is Triosephosphate isomerase (Lactococcus lactis subsp. cremoris (strain MG1363)).